The following is a 657-amino-acid chain: Probable potassium transport system protein Kup (657 aa).

The tract at residues 1–25 (MGSGPADEEHTVDTEPGVSPPRRTV) is disordered. The next 12 helical transmembrane spans lie at 35 to 55 (VVVGALGVVFGDIGTSPIYTI), 77 to 97 (VVSLIFWSVMLIVTATYVLLV), 127 to 147 (TAVLAGLGIFGAALFFGDSMI), 165 to 185 (PGLEEWIVPITAVIIVALFSV), 196 to 216 (LFGPVMIVWFVSIGACGVSGI), 234 to 254 (FFFGHFGIAFFALAAVVLAVT), 275 to 295 (WLVLVLPACVLSYLGQGALLL), 315 to 335 (WPMVLLATAATVIASQAVITG), 365 to 385 (IYVPWINWVLMVSVLTLVFAF), 394 to 414 (AFGMAVTGTITITTLLFFYIV), 422 to 442 (LWLVVCGAGCLLAVDLLFLAA), and 447 to 467 (LVHGAWLPLLIALTAFTVMTT).

The protein belongs to the HAK/KUP transporter (TC 2.A.72) family.

The protein localises to the cell membrane. The enzyme catalyses K(+)(in) + H(+)(in) = K(+)(out) + H(+)(out). Transport of potassium into the cell. Likely operates as a K(+):H(+) symporter. This is Probable potassium transport system protein Kup from Rhodococcus jostii (strain RHA1).